A 914-amino-acid polypeptide reads, in one-letter code: MDLASRYKGVVGMVFGDNQSSNEDSYIQRLLDRISNGTLPDDRRTAIVELQSVVAESNAAQLAFGAAGFPVIVGILKDQRDDLEMVRGALETLLGALTPIDHARAQKTEVQAALMNSDLLSREAENITLLLSLLEEEDFYVRYYTLQILTALLMNSQNRLQEAILTTPRGITRLMDMLMDREVIRNEALLLLTHLTREAEEIQKIVVFEGAFEKIFSIIKEEGGSDGDVVVQDCLELLNNLLRSSSSNQILLRETMGFEPIISILKLRGITYKFTQQKTVNLLSALETINMLIMGRADTEPGKDSNKLANRTVLVQKKLLDYLLMLGVESQWAPVAVRCMTFKCIGDLIDGHPKNRDILASKVLGEDRQVEPALNSILRIILQTSSIQEFVAADYVFKTFCEKNTEGQTMLASTLIPQPHPTSRDHLEDDVHMSFGSMLLRGLCSGEADGDLETCCRAASILSHVVKDNLRCKEKALKIVLESPMPSMGTPEPLFQRIVRYLAVASSMKSKEKSSTLGKSYIQQIILKLLVTWTVDCPTAVQCFLDSRHHLTFLLELVTDPAATVCIRGLASILLGECVIYNKSIENGKDAFSVVDAVGQKMGLTSYFSKFEEMQNSFIFSPSKKPPQGYKPLTRTPTPSEAEINEVDEVDEMVKGNEDHPMLLSLFDASFIGLVKSLEGNIRERIVDVYSRPKSEVAVVPADLEQKSGENEKDYINRLKAFIEKQCSEIQNLLARNAALAEDVASSGRNEQSQGSEQRASTVMDKVQMESIRRELQETSQRLETVKAEKAKIESEASSNKNMAAKLEFDLKSLSDAYNSLEQANYHLEQEVKSLKGGESPMQFPDIEAIKEEVRKEAQKESEDELNDLLVCLGQEESKVEKLSAKLIELGVDVDKLLEDIGDESEAQAESEED.

Coiled-coil stretches lie at residues 723–837 and 863–901; these read IEKQ…SLKG and EDEL…LEDI. Position 911 is a phosphoserine (Ser-911).

The protein localises to the golgi apparatus. It localises to the golgi stack. Golgi matrix protein playing a role in tethering of vesicles to Golgi membranes and in maintaining the overall structure of the Golgi apparatus. Functions in the anterograde transport of storage protein precursors from the endoplasmic reticulum (ER) to the Golgi complex. This chain is Golgin candidate 6 (GC6), found in Arabidopsis thaliana (Mouse-ear cress).